The chain runs to 424 residues: Glutamate-1-semialdehyde 2,1-aminomutase (424 aa).

The residue at position 258 (Lys-258) is an N6-(pyridoxal phosphate)lysine.

The protein belongs to the class-III pyridoxal-phosphate-dependent aminotransferase family. HemL subfamily. Pyridoxal 5'-phosphate serves as cofactor.

It localises to the cytoplasm. It catalyses the reaction (S)-4-amino-5-oxopentanoate = 5-aminolevulinate. Its pathway is porphyrin-containing compound metabolism; protoporphyrin-IX biosynthesis; 5-aminolevulinate from L-glutamyl-tRNA(Glu): step 2/2. This is Glutamate-1-semialdehyde 2,1-aminomutase from Pyrobaculum neutrophilum (strain DSM 2338 / JCM 9278 / NBRC 100436 / V24Sta) (Thermoproteus neutrophilus).